Consider the following 476-residue polypeptide: FAD-dependent monooxygenase dpasE (476 aa).

Positions 1-21 are cleaved as a signal peptide; it reads MSQPAFKIIIVGCSVTGLTLA. Positions 35, 49, and 109 each coordinate FAD. N-linked (GlcNAc...) asparagine glycans are attached at residues Asn190 and Asn219. Asp308 and Ala321 together coordinate FAD. A helical transmembrane segment spans residues 441–461; the sequence is GAGFWITAFLSLSLLAVAATM.

It belongs to the paxM FAD-dependent monooxygenase family. It depends on FAD as a cofactor.

The protein localises to the membrane. It functions in the pathway secondary metabolite biosynthesis; terpenoid biosynthesis. Functionally, FAD-dependent monooxygenase; part of the gene cluster that mediates the biosynthesis of the diterpenoid pyrones subglutinols A and B. The first step of the pathway is the synthesis of the alpha-pyrone moiety by the polyketide synthase dpasA via condensation of one acetyl-CoA starter unit with 3 malonyl-CoA units and 2 methylations. The alpha-pyrone is then combined with geranylgeranyl pyrophosphate (GGPP) formed by the GGPP synthase dpasD through the action of the prenyltransferase dpasC to yield a linear alpha-pyrone diterpenoid. Subsequent steps in the diterpenoid pyrone biosynthetic pathway involve the decalin core formation, which is initiated by the epoxidation of the C10-C11 olefin by the FAD-dependent oxidoreductase dpasE, and is followed by a cyclization cascade catalyzed by the terpene cyclase dpasB. The FAD-linked oxidoreductase dpasF is then involved in tetrahydrofuran (THF) ring formation at the C5 unit to complete the formation of subglutinols A and B. DpasF possesses also an additional catalytic ability of multi-step oxidations to generate a new DDP analog with an enone system at the C5 named FDDP A. In Apiospora sacchari (Arthrinium sacchari), this protein is FAD-dependent monooxygenase dpasE.